The chain runs to 72 residues: SRY-related protein AES1 (72 aa).

Positions 1–69 (VKRPMNAFMV…KHMADYPDYK (69 aa)) form a DNA-binding region, HMG box.

The protein resides in the nucleus. The sequence is that of SRY-related protein AES1 from Alligator mississippiensis (American alligator).